A 274-amino-acid polypeptide reads, in one-letter code: Phosphatidylglycerol--prolipoprotein diacylglyceryl transferase (274 aa).

Transmembrane regions (helical) follow at residues 16-36 (VGLH…LSSF), 62-82 (FALG…VLFY), 94-114 (IIKI…LVIW), and 129-149 (LSVT…ALLI). An a 1,2-diacyl-sn-glycero-3-phospho-(1'-sn-glycerol)-binding site is contributed by R150. 3 helical membrane passes run 184-204 (VQLY…WLCY), 213-233 (GYSA…AEFF), and 247-267 (LTIG…ILWI).

The protein belongs to the Lgt family.

It is found in the cell inner membrane. It carries out the reaction L-cysteinyl-[prolipoprotein] + a 1,2-diacyl-sn-glycero-3-phospho-(1'-sn-glycerol) = an S-1,2-diacyl-sn-glyceryl-L-cysteinyl-[prolipoprotein] + sn-glycerol 1-phosphate + H(+). It functions in the pathway protein modification; lipoprotein biosynthesis (diacylglyceryl transfer). Functionally, catalyzes the transfer of the diacylglyceryl group from phosphatidylglycerol to the sulfhydryl group of the N-terminal cysteine of a prolipoprotein, the first step in the formation of mature lipoproteins. The polypeptide is Phosphatidylglycerol--prolipoprotein diacylglyceryl transferase (Chlamydia muridarum (strain MoPn / Nigg)).